The primary structure comprises 874 residues: Alanine--tRNA ligase (874 aa).

Positions 562, 566, 664, and 668 each coordinate Zn(2+).

The protein belongs to the class-II aminoacyl-tRNA synthetase family. Requires Zn(2+) as cofactor.

It is found in the cytoplasm. The enzyme catalyses tRNA(Ala) + L-alanine + ATP = L-alanyl-tRNA(Ala) + AMP + diphosphate. Its function is as follows. Catalyzes the attachment of alanine to tRNA(Ala) in a two-step reaction: alanine is first activated by ATP to form Ala-AMP and then transferred to the acceptor end of tRNA(Ala). Also edits incorrectly charged Ser-tRNA(Ala) and Gly-tRNA(Ala) via its editing domain. In Neisseria meningitidis serogroup C (strain 053442), this protein is Alanine--tRNA ligase.